The chain runs to 70 residues: Alpha-toxin Bot9 (70 aa).

Residues 6–69 (RDGYIVYPNN…PIKDPSYKCY (64 aa)) form the LCN-type CS-alpha/beta domain. 4 disulfides stabilise this stretch: Cys-16/Cys-68, Cys-20/Cys-40, Cys-26/Cys-50, and Cys-30/Cys-52.

This sequence belongs to the long (4 C-C) scorpion toxin superfamily. Sodium channel inhibitor family. Alpha subfamily. Expressed by the venom gland.

The protein localises to the secreted. Its function is as follows. Alpha toxins bind voltage-independently at site-3 of sodium channels (Nav) and inhibit the inactivation of the activated channels, thereby blocking neuronal transmission. This toxin is active against rat Nav1.2/SCN2A and B.germanica Nav1. In Buthus occitanus tunetanus (Common European scorpion), this protein is Alpha-toxin Bot9.